Here is a 281-residue protein sequence, read N- to C-terminus: ATP synthase gamma chain (281 aa).

The protein belongs to the ATPase gamma chain family. F-type ATPases have 2 components, CF(1) - the catalytic core - and CF(0) - the membrane proton channel. CF(1) has five subunits: alpha(3), beta(3), gamma(1), delta(1), epsilon(1). CF(0) has three main subunits: a, b and c.

It is found in the cell inner membrane. In terms of biological role, produces ATP from ADP in the presence of a proton gradient across the membrane. The gamma chain is believed to be important in regulating ATPase activity and the flow of protons through the CF(0) complex. The protein is ATP synthase gamma chain of Ehrlichia canis (strain Jake).